The chain runs to 288 residues: Fructose-bisphosphate aldolase (288 aa).

Ser49 lines the D-glyceraldehyde 3-phosphate pocket. Asp84 functions as the Proton donor in the catalytic mechanism. 4 residues coordinate Zn(2+): His85, Asp105, Glu135, and His177. Gly178 contributes to the dihydroxyacetone phosphate binding site. Residue His206 participates in Zn(2+) binding. Residues 207 to 209 (GGS) and 228 to 231 (NINT) each bind dihydroxyacetone phosphate.

This sequence belongs to the class II fructose-bisphosphate aldolase family. As to quaternary structure, homodimer. Zn(2+) is required as a cofactor.

The enzyme catalyses beta-D-fructose 1,6-bisphosphate = D-glyceraldehyde 3-phosphate + dihydroxyacetone phosphate. Its pathway is carbohydrate degradation; glycolysis; D-glyceraldehyde 3-phosphate and glycerone phosphate from D-glucose: step 4/4. Functionally, catalyzes the aldol condensation of dihydroxyacetone phosphate (DHAP or glycerone-phosphate) with glyceraldehyde 3-phosphate (G3P) to form fructose 1,6-bisphosphate (FBP) in gluconeogenesis and the reverse reaction in glycolysis. In Mycoplasma genitalium (strain ATCC 33530 / DSM 19775 / NCTC 10195 / G37) (Mycoplasmoides genitalium), this protein is Fructose-bisphosphate aldolase (fba).